The chain runs to 205 residues: MDLKLLNDQGQAATFSAPDTIFGRDFNEALVHQIVVAFQANARSGNRAQKDRAEVKHSTKKPWRQKGTGRARAGMTSSPLWRGGGRAFPNSPEENFSQKVNKKMYRAGIRSILSQLAREDRVAVVDTFTLESPKTKLAAAKLKSLGLDSVLIITDNVDENVYLATRNLPHVAVVEPRYADPLSLIHYKKVLITKPAIAQLEEMLG.

Residues 43 to 95 are disordered; sequence RSGNRAQKDRAEVKHSTKKPWRQKGTGRARAGMTSSPLWRGGGRAFPNSPEEN. A compositionally biased stretch (basic and acidic residues) spans 48–57; that stretch reads AQKDRAEVKH. A compositionally biased stretch (basic residues) spans 58–69; that stretch reads STKKPWRQKGTG.

Belongs to the universal ribosomal protein uL4 family. Part of the 50S ribosomal subunit.

One of the primary rRNA binding proteins, this protein initially binds near the 5'-end of the 23S rRNA. It is important during the early stages of 50S assembly. It makes multiple contacts with different domains of the 23S rRNA in the assembled 50S subunit and ribosome. In terms of biological role, forms part of the polypeptide exit tunnel. The polypeptide is Large ribosomal subunit protein uL4 (Bordetella bronchiseptica (strain ATCC BAA-588 / NCTC 13252 / RB50) (Alcaligenes bronchisepticus)).